Here is a 450-residue protein sequence, read N- to C-terminus: tRNA modification GTPase MnmE (450 aa).

(6S)-5-formyl-5,6,7,8-tetrahydrofolate-binding residues include Arg23, Glu80, and Arg123. A TrmE-type G domain is found at 219 to 372 (GLHVVLAGKP…LRQRLLQLAG (154 aa)). Position 229 (Asn229) interacts with K(+). GTP-binding positions include 229-234 (NVGKSS), 248-254 (TPIAGTT), 273-276 (DTAG), and 353-355 (SAR). Ser233 contacts Mg(2+). The K(+) site is built by Thr248, Ile250, and Thr253. Thr254 lines the Mg(2+) pocket. Position 450 (Lys450) interacts with (6S)-5-formyl-5,6,7,8-tetrahydrofolate.

The protein belongs to the TRAFAC class TrmE-Era-EngA-EngB-Septin-like GTPase superfamily. TrmE GTPase family. In terms of assembly, homodimer. Heterotetramer of two MnmE and two MnmG subunits. The cofactor is K(+).

Its subcellular location is the cytoplasm. Functionally, exhibits a very high intrinsic GTPase hydrolysis rate. Involved in the addition of a carboxymethylaminomethyl (cmnm) group at the wobble position (U34) of certain tRNAs, forming tRNA-cmnm(5)s(2)U34. This Bordetella parapertussis (strain 12822 / ATCC BAA-587 / NCTC 13253) protein is tRNA modification GTPase MnmE.